Consider the following 396-residue polypeptide: Acetate kinase (396 aa).

Asn8 is a binding site for Mg(2+). Lys15 provides a ligand contact to ATP. Arg89 contacts substrate. Asp146 (proton donor/acceptor) is an active-site residue. ATP-binding positions include 206–210 (HIGNG), 283–285 (DMR), and 331–335 (GVGEN). A Mg(2+)-binding site is contributed by Glu383.

It belongs to the acetokinase family. Homodimer. The cofactor is Mg(2+). Mn(2+) is required as a cofactor.

It localises to the cytoplasm. It catalyses the reaction acetate + ATP = acetyl phosphate + ADP. It functions in the pathway metabolic intermediate biosynthesis; acetyl-CoA biosynthesis; acetyl-CoA from acetate: step 1/2. In terms of biological role, catalyzes the formation of acetyl phosphate from acetate and ATP. Can also catalyze the reverse reaction. The protein is Acetate kinase of Streptococcus pneumoniae (strain Hungary19A-6).